Reading from the N-terminus, the 190-residue chain is Dual-action ribosomal maturation protein DarP (190 aa).

The disordered stretch occupies residues 1 to 31 (MIHADHDDNLPDDEEGLPLPPSKSQRKRDMH).

The protein belongs to the DarP family.

It is found in the cytoplasm. Its function is as follows. Member of a network of 50S ribosomal subunit biogenesis factors which assembles along the 30S-50S interface, preventing incorrect 23S rRNA structures from forming. Promotes peptidyl transferase center (PTC) maturation. In Aromatoleum aromaticum (strain DSM 19018 / LMG 30748 / EbN1) (Azoarcus sp. (strain EbN1)), this protein is Dual-action ribosomal maturation protein DarP.